The primary structure comprises 327 residues: Biotin synthase (327 aa).

Residues 49 to 282 (FNKDKIDLCS…NKVIRLCGGR (234 aa)) enclose the Radical SAM core domain. [4Fe-4S] cluster-binding residues include cysteine 67, cysteine 71, and cysteine 74. 4 residues coordinate [2Fe-2S] cluster: serine 110, cysteine 142, cysteine 201, and arginine 277.

Belongs to the radical SAM superfamily. Biotin synthase family. Homodimer. [4Fe-4S] cluster is required as a cofactor. [2Fe-2S] cluster serves as cofactor.

The catalysed reaction is (4R,5S)-dethiobiotin + (sulfur carrier)-SH + 2 reduced [2Fe-2S]-[ferredoxin] + 2 S-adenosyl-L-methionine = (sulfur carrier)-H + biotin + 2 5'-deoxyadenosine + 2 L-methionine + 2 oxidized [2Fe-2S]-[ferredoxin]. The protein operates within cofactor biosynthesis; biotin biosynthesis; biotin from 7,8-diaminononanoate: step 2/2. In terms of biological role, catalyzes the conversion of dethiobiotin (DTB) to biotin by the insertion of a sulfur atom into dethiobiotin via a radical-based mechanism. In Methanococcus maripaludis (strain C5 / ATCC BAA-1333), this protein is Biotin synthase.